The chain runs to 239 residues: 1-(5-phosphoribosyl)-5-[(5-phosphoribosylamino)methylideneamino] imidazole-4-carboxamide isomerase (239 aa).

The Proton acceptor role is filled by D9. The active-site Proton donor is D131.

Belongs to the HisA/HisF family.

It is found in the cytoplasm. The catalysed reaction is 1-(5-phospho-beta-D-ribosyl)-5-[(5-phospho-beta-D-ribosylamino)methylideneamino]imidazole-4-carboxamide = 5-[(5-phospho-1-deoxy-D-ribulos-1-ylimino)methylamino]-1-(5-phospho-beta-D-ribosyl)imidazole-4-carboxamide. It participates in amino-acid biosynthesis; L-histidine biosynthesis; L-histidine from 5-phospho-alpha-D-ribose 1-diphosphate: step 4/9. The polypeptide is 1-(5-phosphoribosyl)-5-[(5-phosphoribosylamino)methylideneamino] imidazole-4-carboxamide isomerase (Phocaeicola vulgatus (strain ATCC 8482 / DSM 1447 / JCM 5826 / CCUG 4940 / NBRC 14291 / NCTC 11154) (Bacteroides vulgatus)).